The primary structure comprises 463 residues: Phytase A (463 aa).

The signal sequence occupies residues 1–19 (MAFFTVALSLYYLLSRVST). N-linked (GlcNAc...) asparagine glycosylation is present at Asn-26. A disulfide bridge connects residues Cys-29 and Cys-38. Residue Asn-41 is glycosylated (N-linked (GlcNAc...) asparagine). Positions 48, 49, 79, 80, 83, and 86 each coordinate 1D-myo-inositol hexakisphosphate. Disulfide bonds link Cys-69–Cys-410, Cys-211–Cys-460, Cys-260–Cys-278, and Cys-431–Cys-439. Catalysis depends on His-80, which acts as the Nucleophile. Asn-103 and Asn-118 each carry an N-linked (GlcNAc...) asparagine glycan. Arg-163 contributes to the 1D-myo-inositol hexakisphosphate binding site. Asn-203 carries N-linked (GlcNAc...) asparagine glycosylation. Asp-207 is a binding site for 1D-myo-inositol hexakisphosphate. Asn-226 carries N-linked (GlcNAc...) asparagine glycosylation. Lys-297 contributes to the 1D-myo-inositol hexakisphosphate binding site. N-linked (GlcNAc...) asparagine glycans are attached at residues Asn-331 and Asn-335. The 1D-myo-inositol hexakisphosphate site is built by His-357 and Asp-358. An N-linked (GlcNAc...) asparagine glycan is attached at Asn-372.

This sequence belongs to the histidine acid phosphatase family. As to quaternary structure, monomer. In terms of processing, seems to be cleaved into at least two pieces, most likely due to proteases in the supernatant. The N-terminal fragment, called phyB seems to retain phytase activity.

The protein resides in the secreted. It carries out the reaction 1D-myo-inositol hexakisphosphate + H2O = 1D-myo-inositol 1,2,4,5,6-pentakisphosphate + phosphate. The catalysed reaction is 1D-myo-inositol 1,2,4,5,6-pentakisphosphate + H2O = 1D-myo-inositol 1,2,5,6-tetrakisphosphate + phosphate. The enzyme catalyses 1D-myo-inositol 1,2,5,6-tetrakisphosphate + H2O = 1D-myo-inositol 1,2,6-trisphosphate + phosphate. It catalyses the reaction 1D-myo-inositol 1,2,6-trisphosphate + H2O = 1D-myo-inositol 1,2-bisphosphate + phosphate. It carries out the reaction 1D-myo-inositol 1,2-bisphosphate + H2O = 1D-myo-inositol 2-phosphate + phosphate. Catalyzes the phosphate monoester hydrolysis of phytic acid (myo-inositol hexakisphosphate), which results in the stepwise formation of myo-inositol pentakis-, tetrakis-, tris-, bis-, and monophosphates, as well as the liberation of inorganic phosphate. Myo-inositol 2-monophosphate is the end product. Has a broad substrate specificity and is also able to dephosphorylate other classic acid phosphatase substrates such as p-nitrophenyl phosphate, phenyl phosphate, fructose 1,6-bisphosphate, fructose 6-phosphate, glucose 6-phosphate, ribose 5-phosphate, alpha-glycerophosphate, beta-glycerophosphate, 3-phosphoglycerate, as well as ADP and ATP. The protein is Phytase A of Emericella nidulans (strain FGSC A4 / ATCC 38163 / CBS 112.46 / NRRL 194 / M139) (Aspergillus nidulans).